The chain runs to 147 residues: Hemoglobin subunit beta (147 aa).

An N-acetylvaline modification is found at V2. The Globin domain occupies 3–147 (HLTAEEKAAV…VATALAHKYH (145 aa)). Position 13 is a phosphothreonine (T13). Residue S45 is modified to Phosphoserine. K60 bears the N6-acetyllysine mark. A heme b-binding site is contributed by H64. K83 is modified (N6-acetyllysine). A heme b-binding site is contributed by H93. The residue at position 94 (C94) is an S-nitrosocysteine. K145 carries the post-translational modification N6-acetyllysine.

The protein belongs to the globin family. Heterotetramer of two alpha chains and two beta chains. In terms of tissue distribution, red blood cells.

Functionally, involved in oxygen transport from the lung to the various peripheral tissues. The protein is Hemoglobin subunit beta (HBB) of Carlito syrichta (Philippine tarsier).